Here is a 104-residue protein sequence, read N- to C-terminus: Large ribosomal subunit protein uL24 (104 aa).

It belongs to the universal ribosomal protein uL24 family. As to quaternary structure, part of the 50S ribosomal subunit.

One of two assembly initiator proteins, it binds directly to the 5'-end of the 23S rRNA, where it nucleates assembly of the 50S subunit. In terms of biological role, one of the proteins that surrounds the polypeptide exit tunnel on the outside of the subunit. The polypeptide is Large ribosomal subunit protein uL24 (Shewanella baltica (strain OS223)).